The following is a 505-amino-acid chain: ATP synthase subunit beta (505 aa).

Residue 157–164 (GGAGVGKT) coordinates ATP.

The protein belongs to the ATPase alpha/beta chains family. F-type ATPases have 2 components, CF(1) - the catalytic core - and CF(0) - the membrane proton channel. CF(1) has five subunits: alpha(3), beta(3), gamma(1), delta(1), epsilon(1). CF(0) has three main subunits: a(1), b(2) and c(9-12). The alpha and beta chains form an alternating ring which encloses part of the gamma chain. CF(1) is attached to CF(0) by a central stalk formed by the gamma and epsilon chains, while a peripheral stalk is formed by the delta and b chains.

The protein localises to the cell inner membrane. The enzyme catalyses ATP + H2O + 4 H(+)(in) = ADP + phosphate + 5 H(+)(out). In terms of biological role, produces ATP from ADP in the presence of a proton gradient across the membrane. The catalytic sites are hosted primarily by the beta subunits. This chain is ATP synthase subunit beta, found in Bacteroides fragilis (strain ATCC 25285 / DSM 2151 / CCUG 4856 / JCM 11019 / LMG 10263 / NCTC 9343 / Onslow / VPI 2553 / EN-2).